We begin with the raw amino-acid sequence, 278 residues long: MDTELLKTFLEVSRTRHFGRAAEALYLTQSAVSFRIRQLENQLGVNLFTRHRNNIRLTTAGEKLLPYAETLMNTWQAARKEVAHTSRHNEFSIGASASLWECMLNAWLGRLYQLQEPQSGLQFEARIAQRQSLVKQLHERQLDLLITTEAPKMDEFSSQLLGHFTLALYCSSPARKKSELNYLRLEWGPDFQQHETGLIAADEVPVLTTSSAELARQQLSALNGCSWLPVNWANEKGGLHTVADSATLSRPLYAIWLQNSDKYSLICDLLKTDVLDEQ.

The HTH lysR-type domain occupies 1 to 58; that stretch reads MDTELLKTFLEVSRTRHFGRAAEALYLTQSAVSFRIRQLENQLGVNLFTRHRNNIRLT. Positions 18–37 form a DNA-binding region, H-T-H motif; that stretch reads FGRAAEALYLTQSAVSFRIR.

The protein belongs to the LysR transcriptional regulatory family.

Negatively regulates the transcription of the flagellar master operon flhDC by binding to the upstream region of the operon. The sequence is that of HTH-type transcriptional regulator HdfR from Salmonella agona (strain SL483).